A 233-amino-acid polypeptide reads, in one-letter code: B-cell lymphoma/leukemia 10 (233 aa).

The residue at position 1 (Met-1) is an N-acetylmethionine. One can recognise a CARD domain in the interval 13-101; sequence LTEVKKDALE…QNFLIQKITD (89 aa). Residues Lys-17, Lys-31, and Lys-63 each participate in a glycyl lysine isopeptide (Lys-Gly) (interchain with G-Cter in ubiquitin) cross-link. Over residues 130–141 the composition is skewed to polar residues; that stretch reads TNNLSRSNSDES. Disordered stretches follow at residues 130–149 and 186–233; these read TNNL…KQRP and SFSS…LSRQ. A Phosphoserine modification is found at Ser-138. Pro residues predominate over residues 195-205; sequence PGDPGAPPLPP.

Homomultimer; homooligomerized following recruitment by CARD domain-containing proteins that form a nucleating helical template that recruits BCL10 via CARD-CARD interaction. Self-associates by CARD-CARD interaction and interacts with other CARD-proteins such as CARD9, CARD10, CARD11 and CARD14. Forms a complex with CARD14 and MALT1; resulting in the formation of a CBM (CARD14-BCL10-MALT1) complex. Forms a complex with CARD11 and MALT1; resulting in the formation of a CBM (CARD11-BCL10-MALT1) complex. Forms a complex with CARD9 and MALT1; resulting in the formation of a CBM (CARD9-BCL10-MALT1) complex. Found in a membrane raft complex, at least composed of BCL10, CARD11, DPP4 and IKBKB. Binds caspase-9 with its C-terminal domain. Interacts with TRAF2 and BIRC2/c-IAP2. Interacts with PELI2 and SOCS3; these interactions may be mutually exclusive. Post-translationally, phosphorylated. Phosphorylation results in dissociation from TRAF2 and binding to BIRC2/c-IAP2. Phosphorylated by IKBKB/IKKB. Ubiquitinated via both 'Lys-63'-linked and linear ('Met-1'-linked) polyubiquitin chains in response to T-cell receptor (TCR) activation. Ubiquitination is recognized by IKBKG/NEMO, the regulatory subunit of I-kappa-B kinase (IKK), and is required for TCR-induced NF-kappa-B activation. Linear ubiquitination at Lys-17, Lys-31 and Lys-63 is mediated by RNF31/HOIP; linear ubiquitination is recognized with much higher affinity than 'Lys-63'-linked ubiquitin by IKBKG/NEMO. CARD11 is required for linear ubiquitination by HOIP by promoting the targeting of BCL10 to RNF31/HOIP. In terms of processing, proteolytically cleaved by MALT1; required for T-cell activation.

Its subcellular location is the cytoplasm. It is found in the perinuclear region. It localises to the membrane raft. In terms of biological role, plays a key role in both adaptive and innate immune signaling by bridging CARD domain-containing proteins to immune activation. Acts by channeling adaptive and innate immune signaling downstream of CARD domain-containing proteins CARD9, CARD11 and CARD14 to activate NF-kappa-B and MAP kinase p38 (MAPK11, MAPK12, MAPK13 and/or MAPK14) pathways which stimulate expression of genes encoding pro-inflammatory cytokines and chemokines. Recruited by activated CARD domain-containing proteins: homooligomerized CARD domain-containing proteins form a nucleating helical template that recruits BCL10 via CARD-CARD interaction, thereby promoting polymerization of BCL10, subsequent recruitment of MALT1 and formation of a CBM complex. This leads to activation of NF-kappa-B and MAP kinase p38 (MAPK11, MAPK12, MAPK13 and/or MAPK14) pathways which stimulate expression of genes encoding pro-inflammatory cytokines and chemokines. Activated by CARD9 downstream of C-type lectin receptors; CARD9-mediated signals are essential for antifungal immunity. Activated by CARD11 downstream of T-cell receptor (TCR) and B-cell receptor (BCR). Promotes apoptosis, pro-caspase-9 maturation and activation of NF-kappa-B via NIK and IKK. The polypeptide is B-cell lymphoma/leukemia 10 (Rattus norvegicus (Rat)).